A 114-amino-acid polypeptide reads, in one-letter code: Hydrogenase maturation factor HypA (114 aa).

Histidine 2 is a Ni(2+) binding site. Positions 73, 76, 89, and 92 each coordinate Zn(2+).

The protein belongs to the HypA/HybF family.

In terms of biological role, involved in the maturation of [NiFe] hydrogenases. Required for nickel insertion into the metal center of the hydrogenase. This Psychromonas ingrahamii (strain DSM 17664 / CCUG 51855 / 37) protein is Hydrogenase maturation factor HypA.